A 218-amino-acid polypeptide reads, in one-letter code: Ependymin (218 aa).

A signal peptide spans 1-20 (MHTVKLLCVVFSCLCAVAWG). N-linked (GlcNAc...) asparagine glycans are attached at residues Asn74 and Asn97.

It belongs to the ependymin family. In terms of assembly, forms disulfide-linked dimers. In terms of processing, binds calcium through the terminal sialic acids.

It localises to the secreted. Its function is as follows. May play a role in neural plasticity. May be involved during axon regeneration. This Devario aequipinnatus (Giant danio) protein is Ependymin (epd).